The following is a 208-amino-acid chain: MTLIPIVVEQTSRGERAYDIYSRLVKERIIFVTGPIEDNMASVIVAQLLFLESENPDKDICMYINSPGGVVTAGLSIYDTMQYINPDVSTLCIGQAASMGSLLLTAGAEGKRYSLPHSRIMIHQPSGGYHGQATDIEIHANEILRVKKKLNQIYEKHTGNSLKKIEEMMERDKFMDPEEAMKTGLIDRVIAERKDMKIENIKVKQKVV.

The active-site Nucleophile is the Ser-98. The active site involves His-123.

Belongs to the peptidase S14 family. Fourteen ClpP subunits assemble into 2 heptameric rings which stack back to back to give a disk-like structure with a central cavity, resembling the structure of eukaryotic proteasomes.

The protein resides in the cytoplasm. It catalyses the reaction Hydrolysis of proteins to small peptides in the presence of ATP and magnesium. alpha-casein is the usual test substrate. In the absence of ATP, only oligopeptides shorter than five residues are hydrolyzed (such as succinyl-Leu-Tyr-|-NHMec, and Leu-Tyr-Leu-|-Tyr-Trp, in which cleavage of the -Tyr-|-Leu- and -Tyr-|-Trp bonds also occurs).. Functionally, cleaves peptides in various proteins in a process that requires ATP hydrolysis. Has a chymotrypsin-like activity. Plays a major role in the degradation of misfolded proteins. This chain is ATP-dependent Clp protease proteolytic subunit, found in Wolbachia pipientis subsp. Culex pipiens (strain wPip).